Reading from the N-terminus, the 318-residue chain is L-malyl-CoA/beta-methylmalyl-CoA lyase (318 aa).

Substrate contacts are provided by phenylalanine 19, arginine 24, lysine 30, and arginine 76. 2 residues coordinate Mg(2+): glutamate 141 and aspartate 168. Substrate contacts are provided by residues 167 to 168 and 251 to 252; these read AD and IH.

It belongs to the HpcH/HpaI aldolase family. Homohexamer. Dimer of trimers. Requires Mg(2+) as cofactor. Mn(2+) serves as cofactor.

It carries out the reaction (S)-malyl-CoA = glyoxylate + acetyl-CoA. The catalysed reaction is (2R,3S)-beta-methylmalyl-CoA = propanoyl-CoA + glyoxylate. Its function is as follows. Involved in the ethylmalonyl-CoA pathway for acetate assimilation. Catalyzes the reversible condensation of glyoxylate and acetyl-CoA to L-malyl-CoA and the reversible condensation of glyoxylate and propionyl-CoA to yield beta-methylmalyl-CoA. The polypeptide is L-malyl-CoA/beta-methylmalyl-CoA lyase (Cereibacter sphaeroides (strain ATCC 17025 / ATH 2.4.3) (Rhodobacter sphaeroides)).